The chain runs to 599 residues: Estrogen receptor (599 aa).

The modulating (transactivation AF-1); mediates interaction with MACROD1 stretch occupies residues 1–188 (MTMTLHTKAS…IMESAKETRY (188 aa)). The O-linked (GlcNAc) serine glycan is linked to serine 10. The tract at residues 35 to 47 (MERALGEVYVDNS) is required for interaction with NCOA1. The interval 35-178 (MERALGEVYV…LSSSNEKGNM (144 aa)) is interaction with DDX5; self-association. O-linked (GlcNAc) threonine glycosylation is present at threonine 50. A phosphoserine; by CDK2 mark is found at serine 108 and serine 110. The residue at position 122 (serine 122) is a Phosphoserine. Residues 147-175 (DTGPPAFYRSNSDNRRQNGRERLSSSNEK) form a disordered region. The segment covering 158–169 (SDNRRQNGRERL) has biased composition (basic and acidic residues). Serine 171 carries the phosphoserine; by CK2 modification. 2 NR C4-type zinc fingers span residues 189–209 (CAVC…CEGC) and 225–249 (CPAT…LRKC). The nuclear receptor DNA-binding region spans 189-254 (CAVCNDYASG…RLRKCYEVGM (66 aa)). A mediates interaction with DNTTIP2 region spans residues 189-314 (CAVCNDYASG…TKKNSPALSL (126 aa)). The tract at residues 255 to 314 (MKGGIRKDRRGGRMLKHKRQRDDLEGRNEMGASGDMRAANLWPSPLVIKHTKKNSPALSL) is hinge. Position 264 is an asymmetric dimethylarginine; by PRMT1 (arginine 264). The segment at 266 to 599 (GRMLKHKRQR…PEAEGFPNTI (334 aa)) is interaction with AKAP13. A self-association region spans residues 268 to 599 (MLKHKRQRDD…PEAEGFPNTI (332 aa)). Residues 315-551 (TADQMVSALL…DLLLEMLDAH (237 aa)) form the NR LBD domain. The interval 315 to 599 (TADQMVSALL…PEAEGFPNTI (285 aa)) is transactivation AF-2. Glutamate 357 and arginine 398 together coordinate 17beta-estradiol. Cysteine 451 is lipidated: S-palmitoyl cysteine. Residue histidine 528 participates in 17beta-estradiol binding. Phosphotyrosine; by Tyr-kinases is present on tyrosine 541. The tract at residues 557–581 (ASRMGVPPEEPSQTQLATTSSTSAH) is disordered. Over residues 568–581 (SQTQLATTSSTSAH) the composition is skewed to low complexity. Threonine 575 is a glycosylation site (O-linked (GlcNAc) threonine).

Belongs to the nuclear hormone receptor family. NR3 subfamily. As to quaternary structure, interacts with BCAS3. Binds DNA as a homodimer. Can form a heterodimer with ESR2. Interacts with coactivator NCOA5. Interacts with PELP1, the interaction is enhanced by 17-beta-estradiol; the interaction increases ESR1 transcriptional activity. Interacts with NCOA7; the interaction is ligand-inducible. Interacts with AKAP13, CUEDC2, HEXIM1, KDM5A, MAP1S, SMARD1, and UBE1C. Interacts with MUC1; the interaction is stimulated by 7 beta-estradiol (E2) and enhances ESR1-mediated transcription. Interacts with DNTTIP2, and UIMC1. Interacts with KMT2D/MLL2. Interacts with ATAD2; the interaction is enhanced by estradiol. Interacts with KIF18A and LDB1. Interacts with RLIM (via its C-terminus). Interacts with MACROD1. Interacts with SH2D4A and PLCG. Interacts with SH2D4A; the interaction blocks binding to PLCG and inhibits estrogen-induced cell proliferation. Interacts with DYNLL1. Interacts with CCDC62; the interaction requires estradiol and appears to enhance the transcription of target genes. Interacts with NR2C1; the interaction prevents homodimerization of ESR1 and suppresses its transcriptional activity and cell growth. Interacts with DNAAF4. Interacts with PRMT2. Interacts with RBFOX2. Interacts with EP300; the interaction is estrogen-dependent and enhanced by CITED1. Interacts with CITED1; the interaction is estrogen-dependent. Interacts with FAM120B, FOXL2, PHB2 and SLC30A9. Interacts with coactivators NCOA3 and NCOA6. Interacts with STK3/MST2 only in the presence of SAV1 and vice-versa. Binds to CSNK1D. Interacts with NCOA2; NCOA2 can interact with ESR1 AF-1 and AF-2 domains simultaneously and mediate their transcriptional synergy. Interacts with DDX5. Interacts with NCOA1; the interaction seems to require a self-association of N-terminal and C-terminal regions. Interacts with ZNF366, DDX17, NFKB1, RELA, SP1 and SP3. Interacts with NRIP1. Interacts with GPER1; the interaction occurs in an estrogen-dependent manner. Interacts with CLOCK and the interaction is stimulated by estrogen. Interacts with BCAS3. Interacts with TRIP4 (ufmylated); estrogen dependent. Interacts with LMTK3; the interaction phosphorylates ESR1 (in vitro) and protects it against proteasomal degradation. Interacts with CCAR2 (via N-terminus) in a ligand-independent manner. Interacts with ZFHX3. Interacts with SFR1 in a ligand-dependent and -independent manner. Interacts with DCAF13, LATS1 and DCAF1; regulates ESR1 ubiquitination and ubiquitin-mediated proteasomal degradation. Interacts (via DNA-binding domain) with POU4F2 isoform 2 (C-terminus); this interaction increases the estrogen receptor ESR1 transcriptional activity in a DNA- and ligand 17-beta-estradiol-independent manner. Interacts with ESRRB isoform 1. Interacts with UBE3A and WBP2. Interacts with GTF2B. Interacts with RBM39. In the absence of hormonal ligand, interacts with TACC1. Interacts with PI3KR1 or PI3KR2 and PTK2/FAK1. Interacts with SRC. Interacts with BAG1; the interaction is promoted in the absence of estradiol (17-beta-estradiol/E2). Interacts with and ubiquitinated by STUB1; the interaction is promoted in the absence of estradiol (17-beta-estradiol/E2). Interacts with NEDD8. In terms of processing, phosphorylated by cyclin A/CDK2 and CK1. Phosphorylation probably enhances transcriptional activity. Dephosphorylation at Ser-122 by PPP5C inhibits its transactivation activity. Phosphorylated by LMTK3 (in vitro). Post-translationally, ubiquitinated. Deubiquitinated by OTUB1. Palmitoylated at Cys-451 by ZDHHC7 and ZDHHC21. This modification is required for plasma membrane targeting and for rapid intracellular signaling via ERK and AKT kinases and cAMP generation, but not for signaling mediated by the nuclear hormone receptor. In terms of processing, ubiquitinated; regulated by LATS1 via DCAF1 it leads to ESR1 proteasomal degradation. Deubiquitinated by OTUB1. Ubiquitinated by STUB1/CHIP; in the CA1 hippocampal region following loss of endogenous circulating estradiol (17-beta-estradiol/E2). Ubiquitinated by UBR5, leading to its degradation: UBR5 specifically recognizes and binds ligand-bound ESR1 when it is not associated with coactivators (NCOAs). In presence of NCOAs, the UBR5-degron is not accessible, preventing its ubiquitination and degradation. Post-translationally, dimethylated by PRMT1 at Arg-264. The methylation may favor cytoplasmic localization. Demethylated by JMJD6 at Arg-264.

It localises to the nucleus. It is found in the cytoplasm. The protein resides in the golgi apparatus. Its subcellular location is the cell membrane. In terms of biological role, nuclear hormone receptor. The steroid hormones and their receptors are involved in the regulation of eukaryotic gene expression and affect cellular proliferation and differentiation in target tissues. Ligand-dependent nuclear transactivation involves either direct homodimer binding to a palindromic estrogen response element (ERE) sequence or association with other DNA-binding transcription factors, such as AP-1/c-Jun, c-Fos, ATF-2, Sp1 and Sp3, to mediate ERE-independent signaling. Ligand binding induces a conformational change allowing subsequent or combinatorial association with multiprotein coactivator complexes through LXXLL motifs of their respective components. Mutual transrepression occurs between the estrogen receptor (ER) and NF-kappa-B in a cell-type specific manner. Decreases NF-kappa-B DNA-binding activity and inhibits NF-kappa-B-mediated transcription from the IL6 promoter and displace RELA/p65 and associated coregulators from the promoter. Recruited to the NF-kappa-B response element of the CCL2 and IL8 promoters and can displace CREBBP. Present with NF-kappa-B components RELA/p65 and NFKB1/p50 on ERE sequences. Can also act synergistically with NF-kappa-B to activate transcription involving respective recruitment adjacent response elements; the function involves CREBBP. Can activate the transcriptional activity of TFF1. Also mediates membrane-initiated estrogen signaling involving various kinase cascades. Essential for MTA1-mediated transcriptional regulation of BRCA1 and BCAS3. Maintains neuronal survival in response to ischemic reperfusion injury when in the presence of circulating estradiol (17-beta-estradiol/E2). This Mus musculus (Mouse) protein is Estrogen receptor (Esr1).